A 61-amino-acid polypeptide reads, in one-letter code: Short neurotoxin 1 (61 aa).

Cystine bridges form between Cys-3–Cys-23, Cys-17–Cys-40, Cys-42–Cys-53, and Cys-54–Cys-59.

This sequence belongs to the three-finger toxin family. Short-chain subfamily. Type I alpha-neurotoxin sub-subfamily. As to expression, expressed by the venom gland.

The protein localises to the secreted. Binds to muscle nicotinic acetylcholine receptor (nAChR) and inhibit acetylcholine from binding to the receptor, thereby impairing neuromuscular transmission. This is Short neurotoxin 1 from Naja samarensis (Peters' cobra).